The primary structure comprises 246 residues: MATGGAAADLEDVQTVDLMSELLRRLKCSQKPDKRLIFIGPPGSGKGTQSPVVKDEYCLCHLSTGDMLRAAVASKTPLGVKAKEAMEKGELVSDDLVVGIIDEAMNKPKCQKGFILDGFPRTVTQAEKLDEMLKRRGTEIDKVLNFAIDDAILEERITGRWIHPSSGRSYHTKFAPPKTPGVDDITGEPLIQRKDDNADVLKSRLAAFHSQTQPVIDYYAKKAVLTNIQAEKAPQEVTSEVKKALS.

N-acetylalanine is present on Ala2. Residue 43–48 (GSGKGT) participates in ATP binding. Residues 63–92 (STGDMLRAAVASKTPLGVKAKEAMEKGELV) form an NMP region. Residues Thr64, Arg69, 90-92 (ELV), 118-121 (GFPR), and Gln125 each bind AMP. The tract at residues 159–196 (GRWIHPSSGRSYHTKFAPPKTPGVDDITGEPLIQRKDD) is LID. Residue Arg160 participates in ATP binding. Residues Arg193 and Arg204 each contribute to the AMP site.

The protein belongs to the adenylate kinase family. In terms of assembly, monomer.

The protein localises to the cytoplasm. It catalyses the reaction AMP + ATP = 2 ADP. Functionally, catalyzes the reversible transfer of the terminal phosphate group between ATP and AMP. Plays an important role in cellular energy homeostasis and in adenine nucleotide metabolism. The sequence is that of Adenylate kinase 4 (ADK1) from Arabidopsis thaliana (Mouse-ear cress).